The following is a 191-amino-acid chain: UPF0312 protein Pmen_0419 (191 aa).

A signal peptide spans 1-22; sequence MLKNALAALVLGSALIGGQAMA.

It belongs to the UPF0312 family. Type 1 subfamily.

It localises to the periplasm. The polypeptide is UPF0312 protein Pmen_0419 (Ectopseudomonas mendocina (strain ymp) (Pseudomonas mendocina)).